A 298-amino-acid chain; its full sequence is Diphthine methyl ester synthase (298 aa).

S-adenosyl-L-methionine is bound by residues leucine 9, aspartate 85, glycine 88, 113-114, leucine 164, leucine 222, and histidine 247; that span reads SV.

The protein belongs to the diphthine synthase family.

It localises to the cytoplasm. It carries out the reaction 2-[(3S)-amino-3-carboxypropyl]-L-histidyl-[translation elongation factor 2] + 4 S-adenosyl-L-methionine = diphthine methyl ester-[translation elongation factor 2] + 4 S-adenosyl-L-homocysteine + 3 H(+). Its pathway is protein modification; peptidyl-diphthamide biosynthesis. In terms of biological role, S-adenosyl-L-methionine-dependent methyltransferase that catalyzes four methylations of the modified target histidine residue in translation elongation factor 2 (EF-2), to form an intermediate called diphthine methyl ester. The four successive methylation reactions represent the second step of diphthamide biosynthesis. This is Diphthine methyl ester synthase (DPH5) from Kluyveromyces lactis (strain ATCC 8585 / CBS 2359 / DSM 70799 / NBRC 1267 / NRRL Y-1140 / WM37) (Yeast).